A 491-amino-acid chain; its full sequence is Large ribosomal subunit protein mL101 (rPPR4) (491 aa).

PPR repeat units follow at residues 122–156 (TELT…NITP), 157–191 (SSMS…NVMP), 192–226 (DSYT…GRVA), 228–262 (DWTT…NTQR), 263–293 (DFTA…LRLA), 298–328 (SNVA…WQAN), 333–367 (DIRI…GGKL), and 368–402 (NAKT…GKGD).

It belongs to the PPR family. P subfamily. In terms of assembly, component of the mitochondrial ribosome large subunit.

The protein resides in the mitochondrion. This chain is Large ribosomal subunit protein mL101 (rPPR4), found in Arabidopsis thaliana (Mouse-ear cress).